A 486-amino-acid polypeptide reads, in one-letter code: Katanin p60 ATPase-containing subunit A1 (486 aa).

Residues 103–174 form a disordered region; sequence RSSPLPVRRP…NKAEVSEKEV (72 aa). The span at 143–174 shows a compositional bias: basic and acidic residues; the sequence is NGDRAKPLKGKEKKEAKPKDDKNKAEVSEKEV. 244 to 251 provides a ligand contact to ATP; that stretch reads GPPGTGKT.

The protein belongs to the AAA ATPase family. Katanin p60 subunit A1 subfamily. In terms of assembly, can homooligomerize into hexameric rings, which may be promoted by interaction with microtubules. Interacts with katnb1, which may serve as a targeting subunit.

The protein resides in the cytoplasm. Its subcellular location is the cytoskeleton. It localises to the microtubule organizing center. The protein localises to the centrosome. It is found in the spindle pole. The protein resides in the spindle. The catalysed reaction is n ATP + n H2O + a microtubule = n ADP + n phosphate + (n+1) alpha/beta tubulin heterodimers.. With respect to regulation, ATPase activity is stimulated by microtubules, which promote homooligomerization. ATP-dependent microtubule severing is stimulated by interaction with katnb1. Its function is as follows. Catalytic subunit of a complex which severs microtubules in an ATP-dependent manner. Microtubule severing may promote rapid reorganization of cellular microtubule arrays and the release of microtubules from the centrosome following nucleation. The sequence is that of Katanin p60 ATPase-containing subunit A1 (katna1) from Salmo salar (Atlantic salmon).